Consider the following 253-residue polypeptide: 28 kDa inner dynein arm light chain, axonemal (253 aa).

The segment at 19-44 (TSKDKGKGAKGTPGKKGALPPVEQKP) is disordered. The stretch at 160 to 239 (IRKALQTEQG…LKQQLETFLV (80 aa)) forms a coiled coil.

The protein belongs to the inner dynein arm light chain family.

It localises to the cytoplasm. It is found in the cytoskeleton. Its subcellular location is the flagellum axoneme. Functionally, plays a dynamic role in flagellar motility. May be necessary for stable assembly of a subset of inner dynein arms or for the binding of these arms to the outer doublet microtubules of the axoneme. The polypeptide is 28 kDa inner dynein arm light chain, axonemal (IDA4) (Chlamydomonas reinhardtii (Chlamydomonas smithii)).